Here is a 707-residue protein sequence, read N- to C-terminus: Golgin candidate 1 (707 aa).

At 1–664 (MASWLKAAED…RATRFLWRYP (664 aa)) the chain is on the cytoplasmic side. 3 disordered regions span residues 22–106 (VVED…EIHP), 121–196 (VADT…SKRD), and 234–256 (QEPK…ADTT). Residues 38 to 47 (SGRKGSQGKR) are compositionally biased toward low complexity. The span at 56-67 (VKEESSNKRDSS) shows a compositional bias: basic and acidic residues. Over residues 68–80 (GDQSGPGVSQSEV) the composition is skewed to polar residues. Positions 83–95 (SKSSVSTDETSSS) are enriched in low complexity. Basic and acidic residues-rich tracts occupy residues 139 to 150 (DGDRSESKHADG), 185 to 196 (TQRELDDSSKRD), and 245 to 254 (LKREQDRRAD). Coiled-coil stretches lie at residues 287–424 (RVCA…NATK) and 452–608 (ADER…KSRV). The helical; Signal-anchor for type II membrane protein transmembrane segment at 665-685 (IARMFLLFYLVFVHLFLMYLI) threads the bilayer. At 686–707 (HRLQEQAEAQEVAAMTNNVFRL) the chain is on the lumenal side.

The protein localises to the golgi apparatus membrane. Golgi matrix protein playing a role in tethering of vesicles to Golgi membranes and in maintaining the overall structure of the Golgi apparatus. In Arabidopsis thaliana (Mouse-ear cress), this protein is Golgin candidate 1 (GC1).